Here is a 1085-residue protein sequence, read N- to C-terminus: Tudor domain-containing protein 7B (1085 aa).

One can recognise an HTH OST-type 1 domain in the interval 3–76; sequence DEELVKKMVR…SGEVMCHATT (74 aa). 3 disordered regions span residues 112–183, 200–228, and 297–341; these read APLV…PEKR, RNPQHINVPSNLNENTTPPKPRLPHSAPY, and PAKE…KALS. Polar residues predominate over residues 203-216; it reads QHINVPSNLNENTT. Positions 229–299 constitute an HTH OST-type 2 domain; it reads SPKLVQSRLQ…PQELLLYPAK (71 aa). A compositionally biased stretch (polar residues) spans 322-335; it reads TQRPSLTAKSNTPE. An HTH OST-type 3 domain is found at 340–410; sequence LSPDLKQKLG…PKRAILYAKV (71 aa). Tudor domains are found at residues 496–554 and 686–743; these read SPSP…FYRL and RPFC…LLRD. Residues 843–853 show a composition bias toward polar residues; it reads NVPTATQTSSL. The tract at residues 843–888 is disordered; sequence NVPTATQTSSLKTDRGDKALHTPKKTSPPLGSKSTPAGSPPERLSL.

Its subcellular location is the cytoplasm. Functionally, component of specific cytoplasmic RNA granules involved in post-transcriptional regulation of specific genes: probably acts by binding to specific mRNAs and regulating their translation. Probably required during spermatogenesis. This is Tudor domain-containing protein 7B (tdrd7b) from Danio rerio (Zebrafish).